A 642-amino-acid chain; its full sequence is tRNA uridine 5-carboxymethylaminomethyl modification enzyme MnmG (642 aa).

FAD is bound by residues 12-17, Val-124, and Ser-179; that span reads GAGHAG. Residue 272–286 participates in NAD(+) binding; it reads GPRYCPSIEDKITRF. Gln-369 serves as a coordination point for FAD.

This sequence belongs to the MnmG family. Homodimer. Heterotetramer of two MnmE and two MnmG subunits. It depends on FAD as a cofactor.

Its subcellular location is the cytoplasm. NAD-binding protein involved in the addition of a carboxymethylaminomethyl (cmnm) group at the wobble position (U34) of certain tRNAs, forming tRNA-cmnm(5)s(2)U34. This chain is tRNA uridine 5-carboxymethylaminomethyl modification enzyme MnmG, found in Bdellovibrio bacteriovorus (strain ATCC 15356 / DSM 50701 / NCIMB 9529 / HD100).